Reading from the N-terminus, the 363-residue chain is F-box protein At3g44326 (363 aa).

Positions 1–23 are disordered; sequence MLSSSSSSTVEQPSRGGSPGINA. In terms of domain architecture, F-box spans 27-66; it reads DVLRSNILTRLDGSSLAALSCTCSNLNSFCSDESLWRQQC.

The protein is F-box protein At3g44326 of Arabidopsis thaliana (Mouse-ear cress).